A 267-amino-acid chain; its full sequence is Hemin import ATP-binding protein HmuV (267 aa).

Residues 3-243 (LEVRGIEVWR…ELVARVFGLR (241 aa)) enclose the ABC transporter domain. Position 35 to 42 (35 to 42 (GPNGAGKS)) interacts with ATP.

The protein belongs to the ABC transporter superfamily. Heme (hemin) importer (TC 3.A.1.14.5) family. The complex is composed of two ATP-binding proteins (HmuV), two transmembrane proteins (HmuU) and a solute-binding protein (HmuT).

It is found in the cell inner membrane. Functionally, part of the ABC transporter complex HmuTUV involved in hemin import. Responsible for energy coupling to the transport system. The protein is Hemin import ATP-binding protein HmuV of Myxococcus xanthus (strain DK1622).